The sequence spans 121 residues: Large ribosomal subunit protein bL12 (121 aa).

This sequence belongs to the bacterial ribosomal protein bL12 family. As to quaternary structure, homodimer. Part of the ribosomal stalk of the 50S ribosomal subunit. Forms a multimeric L10(L12)X complex, where L10 forms an elongated spine to which 2 to 4 L12 dimers bind in a sequential fashion. Binds GTP-bound translation factors.

Forms part of the ribosomal stalk which helps the ribosome interact with GTP-bound translation factors. Is thus essential for accurate translation. The protein is Large ribosomal subunit protein bL12 of Alkaliphilus oremlandii (strain OhILAs) (Clostridium oremlandii (strain OhILAs)).